A 336-amino-acid chain; its full sequence is Eukaryotic translation initiation factor 3 subunit H (336 aa).

One can recognise an MPN domain in the interval 21-154; sequence VQCDGLAAMK…LKAYRLTPQA (134 aa).

The protein belongs to the eIF-3 subunit H family. In terms of assembly, component of the eukaryotic translation initiation factor 3 (eIF-3) complex.

The protein localises to the cytoplasm. Its function is as follows. Component of the eukaryotic translation initiation factor 3 (eIF-3) complex, which is involved in protein synthesis of a specialized repertoire of mRNAs and, together with other initiation factors, stimulates binding of mRNA and methionyl-tRNAi to the 40S ribosome. The eIF-3 complex specifically targets and initiates translation of a subset of mRNAs involved in cell proliferation. The chain is Eukaryotic translation initiation factor 3 subunit H from Aedes aegypti (Yellowfever mosquito).